The primary structure comprises 277 residues: Alpha carbonic anhydrase 5 (277 aa).

The first 22 residues, 1-22 (MKIPSIGYVFFLIFISITIVSS), serve as a signal peptide directing secretion. Positions 33–269 (TQFNYEKKGE…KNERPVALYI (237 aa)) constitute an Alpha-carbonic anhydrase domain. C58 and C219 are disulfide-bonded. N91 is a glycosylation site (N-linked (GlcNAc...) asparagine). H99 functions as the Proton acceptor in the catalytic mechanism. N-linked (GlcNAc...) asparagine glycosylation occurs at N117. Positions 127, 129, and 146 each coordinate Zn(2+). 215–216 (TT) provides a ligand contact to substrate.

Belongs to the alpha-class carbonic anhydrase family. It depends on Zn(2+) as a cofactor. Post-translationally, N-glycosylated.

It is found in the plastid. It localises to the chloroplast stroma. The enzyme catalyses hydrogencarbonate + H(+) = CO2 + H2O. In terms of biological role, reversible hydration of carbon dioxide. This is Alpha carbonic anhydrase 5 (ACA5) from Arabidopsis thaliana (Mouse-ear cress).